Here is a 532-residue protein sequence, read N- to C-terminus: Light-independent protochlorophyllide reductase subunit B (532 aa).

Aspartate 36 contacts [4Fe-4S] cluster. Aspartate 282 functions as the Proton donor in the catalytic mechanism. Position 417 to 418 (glycine 417 to leucine 418) interacts with substrate.

The protein belongs to the ChlB/BchB/BchZ family. In terms of assembly, protochlorophyllide reductase is composed of three subunits; BchL, BchN and BchB. Forms a heterotetramer of two BchB and two BchN subunits. [4Fe-4S] cluster serves as cofactor.

It carries out the reaction chlorophyllide a + oxidized 2[4Fe-4S]-[ferredoxin] + 2 ADP + 2 phosphate = protochlorophyllide a + reduced 2[4Fe-4S]-[ferredoxin] + 2 ATP + 2 H2O. It functions in the pathway porphyrin-containing compound metabolism; bacteriochlorophyll biosynthesis (light-independent). Component of the dark-operative protochlorophyllide reductase (DPOR) that uses Mg-ATP and reduced ferredoxin to reduce ring D of protochlorophyllide (Pchlide) to form chlorophyllide a (Chlide). This reaction is light-independent. The NB-protein (BchN-BchB) is the catalytic component of the complex. The protein is Light-independent protochlorophyllide reductase subunit B of Methylobacterium radiotolerans (strain ATCC 27329 / DSM 1819 / JCM 2831 / NBRC 15690 / NCIMB 10815 / 0-1).